Reading from the N-terminus, the 542-residue chain is Glucose-6-phosphate isomerase 2 (542 aa).

The Proton donor role is filled by E353. Residues H384 and K505 contribute to the active site.

The protein belongs to the GPI family.

It localises to the cytoplasm. It catalyses the reaction alpha-D-glucose 6-phosphate = beta-D-fructose 6-phosphate. Its pathway is carbohydrate biosynthesis; gluconeogenesis. It participates in carbohydrate degradation; glycolysis; D-glyceraldehyde 3-phosphate and glycerone phosphate from D-glucose: step 2/4. In terms of biological role, catalyzes the reversible isomerization of glucose-6-phosphate to fructose-6-phosphate. This Cupriavidus pinatubonensis (strain JMP 134 / LMG 1197) (Cupriavidus necator (strain JMP 134)) protein is Glucose-6-phosphate isomerase 2.